A 1018-amino-acid chain; its full sequence is Contactin-1 (1018 aa).

The signal sequence occupies residues 1-20 (MKMWLLVSHLVIISITTCLA). 6 Ig-like C2-type domains span residues 41–131 (PIFE…ATLS), 137–223 (PFPP…KSVF), 241–326 (PADI…ARIY), 331–407 (PEWV…AELK), 413–500 (PTFE…GTLV), and 504–601 (PTRI…LVVR). 2 disulfide bridges follow: Cys-65–Cys-114 and Cys-158–Cys-211. 2 N-linked (GlcNAc...) asparagine glycosylation sites follow: Asn-208 and Asn-258. Residues Cys-263 and Cys-310 are joined by a disulfide bond. N-linked (GlcNAc...) asparagine glycosylation is present at Asn-338. 2 disulfide bridges follow: Cys-352–Cys-391 and Cys-436–Cys-484. 2 N-linked (GlcNAc...) asparagine glycosylation sites follow: Asn-457 and Asn-473. N-linked (GlcNAc...) (complex) asparagine glycosylation is present at Asn-494. N-linked (GlcNAc...) asparagine glycosylation is present at Asn-521. A disulfide bridge connects residues Cys-526 and Cys-583. Residue Asn-591 is glycosylated (N-linked (GlcNAc...) asparagine). Fibronectin type-III domains lie at 606-704 (PPGG…TDGA), 709-806 (APSD…SAQD), 811-906 (APTE…APPS), and 907-1000 (QPPR…TLSP). Positions 693–717 (SIPSNRIKTDGAAPNVAPSDVGGGG) are disordered. Asn-933 carries an N-linked (GlcNAc...) asparagine glycan. A lipid anchor (GPI-anchor amidated serine) is attached at Ser-993. Residues 994–1018 (GAPTLSPSLLGLLLPAFGILVYLEF) constitute a propeptide, removed in mature form.

Belongs to the immunoglobulin superfamily. Contactin family. In terms of assembly, monomer. Interacts with CNTNAP1 in cis form. Binds to the carbonic-anhydrase like domain of PTPRZ1. Interacts with NOTCH1 and TNR. Detected in a complex with NRCAM and PTPRB. Interacts with TASOR. In terms of tissue distribution, strongly expressed in brain and in neuroblastoma and retinoblastoma cell lines. Lower levels of expression in lung, pancreas, kidney and skeletal muscle.

The protein localises to the cell membrane. Its function is as follows. Contactins mediate cell surface interactions during nervous system development. Involved in the formation of paranodal axo-glial junctions in myelinated peripheral nerves and in the signaling between axons and myelinating glial cells via its association with CNTNAP1. Participates in oligodendrocytes generation by acting as a ligand of NOTCH1. Its association with NOTCH1 promotes NOTCH1 activation through the released notch intracellular domain (NICD) and subsequent translocation to the nucleus. Interaction with TNR induces a repulsion of neurons and an inhibition of neurite outgrowth. The sequence is that of Contactin-1 (CNTN1) from Homo sapiens (Human).